A 372-amino-acid polypeptide reads, in one-letter code: Dual-specificity RNA methyltransferase RlmN (372 aa).

E97 (proton acceptor) is an active-site residue. The region spanning 103-340 (ETDRKTLCVS…AVVRKNRGTD (238 aa)) is the Radical SAM core domain. C110 and C345 are oxidised to a cystine. Positions 117, 121, and 124 each coordinate [4Fe-4S] cluster. Residues 172–173 (GE), S204, 226–228 (SLN), and N302 each bind S-adenosyl-L-methionine. The S-methylcysteine intermediate role is filled by C345. Residues 350 to 372 (AEGGPGDPRRRAAAALTGTPAAG) form a disordered region. The segment covering 362-372 (AAALTGTPAAG) has biased composition (low complexity).

Belongs to the radical SAM superfamily. RlmN family. Requires [4Fe-4S] cluster as cofactor.

It localises to the cytoplasm. It catalyses the reaction adenosine(2503) in 23S rRNA + 2 reduced [2Fe-2S]-[ferredoxin] + 2 S-adenosyl-L-methionine = 2-methyladenosine(2503) in 23S rRNA + 5'-deoxyadenosine + L-methionine + 2 oxidized [2Fe-2S]-[ferredoxin] + S-adenosyl-L-homocysteine. It carries out the reaction adenosine(37) in tRNA + 2 reduced [2Fe-2S]-[ferredoxin] + 2 S-adenosyl-L-methionine = 2-methyladenosine(37) in tRNA + 5'-deoxyadenosine + L-methionine + 2 oxidized [2Fe-2S]-[ferredoxin] + S-adenosyl-L-homocysteine. Its function is as follows. Specifically methylates position 2 of adenine 2503 in 23S rRNA and position 2 of adenine 37 in tRNAs. m2A2503 modification seems to play a crucial role in the proofreading step occurring at the peptidyl transferase center and thus would serve to optimize ribosomal fidelity. This chain is Dual-specificity RNA methyltransferase RlmN, found in Anaeromyxobacter dehalogenans (strain 2CP-C).